The primary structure comprises 256 residues: Hydroxyethylthiazole kinase (256 aa).

Substrate is bound at residue M38. ATP contacts are provided by T114 and T159. Residue G186 coordinates substrate.

Belongs to the Thz kinase family. It depends on Mg(2+) as a cofactor.

The enzyme catalyses 5-(2-hydroxyethyl)-4-methylthiazole + ATP = 4-methyl-5-(2-phosphooxyethyl)-thiazole + ADP + H(+). The protein operates within cofactor biosynthesis; thiamine diphosphate biosynthesis; 4-methyl-5-(2-phosphoethyl)-thiazole from 5-(2-hydroxyethyl)-4-methylthiazole: step 1/1. Catalyzes the phosphorylation of the hydroxyl group of 4-methyl-5-beta-hydroxyethylthiazole (THZ). This chain is Hydroxyethylthiazole kinase, found in Streptococcus agalactiae serotype V (strain ATCC BAA-611 / 2603 V/R).